Consider the following 398-residue polypeptide: Glucose-1-phosphate adenylyltransferase (398 aa).

Alpha-D-glucose 1-phosphate contacts are provided by residues tyrosine 100, glycine 165, 180 to 181, and serine 191; that span reads EK.

This sequence belongs to the bacterial/plant glucose-1-phosphate adenylyltransferase family. In terms of assembly, homotetramer.

The enzyme catalyses alpha-D-glucose 1-phosphate + ATP + H(+) = ADP-alpha-D-glucose + diphosphate. It functions in the pathway glycan biosynthesis; glycogen biosynthesis. Involved in the biosynthesis of ADP-glucose, a building block required for the elongation reactions to produce glycogen. Catalyzes the reaction between ATP and alpha-D-glucose 1-phosphate (G1P) to produce pyrophosphate and ADP-Glc. The protein is Glucose-1-phosphate adenylyltransferase of Desulfitobacterium hafniense (strain DSM 10664 / DCB-2).